The primary structure comprises 172 residues: 3-hydroxydecanoyl-[acyl-carrier-protein] dehydratase (172 aa).

His-71 is an active-site residue.

This sequence belongs to the thioester dehydratase family. FabA subfamily. Homodimer.

It localises to the cytoplasm. It carries out the reaction a (3R)-hydroxyacyl-[ACP] = a (2E)-enoyl-[ACP] + H2O. It catalyses the reaction (3R)-hydroxydecanoyl-[ACP] = (2E)-decenoyl-[ACP] + H2O. The catalysed reaction is (2E)-decenoyl-[ACP] = (3Z)-decenoyl-[ACP]. Its pathway is lipid metabolism; fatty acid biosynthesis. In terms of biological role, necessary for the introduction of cis unsaturation into fatty acids. Catalyzes the dehydration of (3R)-3-hydroxydecanoyl-ACP to E-(2)-decenoyl-ACP and then its isomerization to Z-(3)-decenoyl-ACP. Can catalyze the dehydratase reaction for beta-hydroxyacyl-ACPs with saturated chain lengths up to 16:0, being most active on intermediate chain length. In Pseudoalteromonas atlantica (strain T6c / ATCC BAA-1087), this protein is 3-hydroxydecanoyl-[acyl-carrier-protein] dehydratase.